Here is a 536-residue protein sequence, read N- to C-terminus: MKSKFIFITGGVVSSLGKGLTAASIGMLLKSRGYSVVNQKFDPYLNVDPGTMNPYQHGEVFVTEDGGETDLDLGHYERFTDVPLHKFNSTSAGKVYLAILDRERAGGYNGGTVQVVPHVTDEIQSRILGTAEQTGADFVISEIGGTVGDIEALPFIEAIRQIRYTVGKENCMFVHLGLLPYLKECGEIKTKPMQHSVKELLSFGIQPDILICRSEKRLSKSTREKLSLFSNIPQDAIIENLTAKSIYEVPLMLEEAGLGKVLCKLFNIENKEPNLEEWKKMVQTYYNPEKEITIALVGKYVELPDAYLSVAEALTAAGIYHKTSIKLLWIDSKKIETKEDAAAFLKDADGIIVPGGFGDRGINGMLLTAQFARENKIPYFGICLGMQISAIEYALNALHIEEANSSEFDKNAKNPVIDLMPDQKDVKIGGTLRLGLYRCMIAEGSLAEKAYKSHEIQERHRHRYEFNNLYREKFDNSDMIFSGLNPERNLVEIVELKSHPWFVAVQFHPEFASRPNKPHPLFRDFIKAAVDNKINR.

An amidoligase domain region spans residues 1–268; that stretch reads MKSKFIFITG…GKVLCKLFNI (268 aa). Ser14 lines the CTP pocket. Residue Ser14 participates in UTP binding. 15–20 is an ATP binding site; it reads SLGKGL. L-glutamine is bound at residue Tyr55. An ATP-binding site is contributed by Asp72. 2 residues coordinate Mg(2+): Asp72 and Glu142. CTP-binding positions include 149–151, 189–194, and Lys225; these read DIE and KTKPMQ. UTP contacts are provided by residues 189 to 194 and Lys225; that span reads KTKPMQ. The 243-residue stretch at 293–535 folds into the Glutamine amidotransferase type-1 domain; it reads TIALVGKYVE…IKAAVDNKIN (243 aa). Gly356 contributes to the L-glutamine binding site. The active-site Nucleophile; for glutamine hydrolysis is Cys383. Residues 384-387, Glu407, and Arg463 each bind L-glutamine; that span reads LGMQ. Residues His508 and Glu510 contribute to the active site.

It belongs to the CTP synthase family. Homotetramer.

It catalyses the reaction UTP + L-glutamine + ATP + H2O = CTP + L-glutamate + ADP + phosphate + 2 H(+). It carries out the reaction L-glutamine + H2O = L-glutamate + NH4(+). The catalysed reaction is UTP + NH4(+) + ATP = CTP + ADP + phosphate + 2 H(+). It functions in the pathway pyrimidine metabolism; CTP biosynthesis via de novo pathway; CTP from UDP: step 2/2. Its activity is regulated as follows. Allosterically activated by GTP, when glutamine is the substrate; GTP has no effect on the reaction when ammonia is the substrate. The allosteric effector GTP functions by stabilizing the protein conformation that binds the tetrahedral intermediate(s) formed during glutamine hydrolysis. Inhibited by the product CTP, via allosteric rather than competitive inhibition. Catalyzes the ATP-dependent amination of UTP to CTP with either L-glutamine or ammonia as the source of nitrogen. Regulates intracellular CTP levels through interactions with the four ribonucleotide triphosphates. This chain is CTP synthase, found in Treponema denticola (strain ATCC 35405 / DSM 14222 / CIP 103919 / JCM 8153 / KCTC 15104).